A 234-amino-acid polypeptide reads, in one-letter code: Small ribosomal subunit protein uS3 (234 aa).

Positions 39–107 (VRDYLKKKLS…PVHVNIEEVR (69 aa)) constitute a KH type-2 domain. The segment at 212–234 (EQPAAAEQEKRGKKSGVKHAAAS) is disordered.

It belongs to the universal ribosomal protein uS3 family. Part of the 30S ribosomal subunit. Forms a tight complex with proteins S10 and S14.

Binds the lower part of the 30S subunit head. Binds mRNA in the 70S ribosome, positioning it for translation. The sequence is that of Small ribosomal subunit protein uS3 from Thiobacillus denitrificans (strain ATCC 25259 / T1).